Consider the following 255-residue polypeptide: tRNA uridine(34) hydroxylase (255 aa).

The region spanning 125-219 (ATPDTILLDV…YLEQIPESES (95 aa)) is the Rhodanese domain. C179 serves as the catalytic Cysteine persulfide intermediate.

It belongs to the TrhO family.

The enzyme catalyses uridine(34) in tRNA + AH2 + O2 = 5-hydroxyuridine(34) in tRNA + A + H2O. Its function is as follows. Catalyzes oxygen-dependent 5-hydroxyuridine (ho5U) modification at position 34 in tRNAs. This chain is tRNA uridine(34) hydroxylase, found in Nitrobacter winogradskyi (strain ATCC 25391 / DSM 10237 / CIP 104748 / NCIMB 11846 / Nb-255).